Reading from the N-terminus, the 55-residue chain is MAVQQNRKTRAKRGMRRSHDALTTAALTVDQTSGEIHRRHHVTADGFYRGKKVIA.

Belongs to the bacterial ribosomal protein bL32 family.

The protein is Large ribosomal subunit protein bL32 of Aeromonas hydrophila subsp. hydrophila (strain ATCC 7966 / DSM 30187 / BCRC 13018 / CCUG 14551 / JCM 1027 / KCTC 2358 / NCIMB 9240 / NCTC 8049).